The sequence spans 468 residues: Dihydrolipoyl dehydrogenase (468 aa).

FAD contacts are provided by residues 39–47, Lys-56, and Ala-119; that span reads EKGNLGGVC. Residues Cys-47 and Cys-52 are joined by a disulfide bond. Residues 183–187, Glu-206, and 271–274 contribute to the NAD(+) site; these read GGGYI and TVGR. Residues Asp-314 and Ala-322 each contribute to the FAD site. The Proton acceptor role is filled by His-446.

It belongs to the class-I pyridine nucleotide-disulfide oxidoreductase family. In terms of assembly, homodimer. The cofactor is FAD.

It localises to the cytoplasm. It is found in the membrane. The enzyme catalyses N(6)-[(R)-dihydrolipoyl]-L-lysyl-[protein] + NAD(+) = N(6)-[(R)-lipoyl]-L-lysyl-[protein] + NADH + H(+). Functionally, lipoamide dehydrogenase is a component of the alpha-ketoacid dehydrogenase complexes. The polypeptide is Dihydrolipoyl dehydrogenase (pdhD) (Staphylococcus aureus (strain COL)).